Reading from the N-terminus, the 296-residue chain is GTPase Era (296 aa).

The Era-type G domain maps to 7 to 174; that stretch reads KCSMSAIVGT…VDYLCETSPY (168 aa). Positions 15 to 22 are G1; that stretch reads GTTNAGKS. 15–22 is a GTP binding site; it reads GTTNAGKS. The G2 stretch occupies residues 41 to 45; the sequence is QTTRV. Residues 62-65 are G3; it reads DTPG. GTP-binding positions include 62–66 and 124–127; these read DTPGI and NKID. The interval 124-127 is G4; that stretch reads NKID. Positions 153–155 are G5; it reads ISA. Residues 205–282 form the KH type-2 domain; sequence LRHELPYSLS…HLFLFVKVRE (78 aa).

The protein belongs to the TRAFAC class TrmE-Era-EngA-EngB-Septin-like GTPase superfamily. Era GTPase family. As to quaternary structure, monomer.

It localises to the cytoplasm. It is found in the cell inner membrane. Functionally, an essential GTPase that binds both GDP and GTP, with rapid nucleotide exchange. Plays a role in 16S rRNA processing and 30S ribosomal subunit biogenesis and possibly also in cell cycle regulation and energy metabolism. This is GTPase Era from Ehrlichia ruminantium (strain Gardel).